The sequence spans 433 residues: MGFRIYEIKARQIIDSRGNPTVEADVILEDGSLGRAAVPSGASTGINEAVELRDGDKSVYMGKGVLKAVENIINIISPELEGMSALNQVEIDRKMLALDGTPNKSKLGANAILAVSMATARAAAEYLGLKVYQYLGAYKANILPTPMCNIINGGAHSDNCVDFQEFMIMPIGAKTFNDAIRMSAEVFHTLKGILSKRGYATSVGDEGGFAPNLKSNEEACEVIMEAIKNAGYTPGTDIAIALDPATSELYDPETKKYVLRWSTKEELTSEEMVEYWAKWVEKYPIISIEDGMAEEDWDGWKKLTDKIGDKVQLVGDDLFVTNTSFLKKGIEMKVANAILIKVNQIGTLTETFEAVEMAKKAGYTAIVSHRSGETEDTTIADLVVALGTGQIKTGSLSRTDRIAKYNQLLRIEEELGSIAEYHGRDVFYSIKKQ.

Glutamine 164 is a (2R)-2-phosphoglycerate binding site. Glutamate 206 serves as the catalytic Proton donor. The Mg(2+) site is built by aspartate 243, glutamate 289, and aspartate 316. Positions 341, 370, 371, and 392 each coordinate (2R)-2-phosphoglycerate. Lysine 341 (proton acceptor) is an active-site residue.

The protein belongs to the enolase family. Mg(2+) is required as a cofactor.

It localises to the cytoplasm. It is found in the secreted. Its subcellular location is the cell surface. The catalysed reaction is (2R)-2-phosphoglycerate = phosphoenolpyruvate + H2O. Its pathway is carbohydrate degradation; glycolysis; pyruvate from D-glyceraldehyde 3-phosphate: step 4/5. Catalyzes the reversible conversion of 2-phosphoglycerate (2-PG) into phosphoenolpyruvate (PEP). It is essential for the degradation of carbohydrates via glycolysis. This is Enolase from Borrelia hermsii (strain HS1 / DAH).